The chain runs to 461 residues: Coagulation factor IX (461 aa).

The first 28 residues, 1–28, serve as a signal peptide directing secretion; that stretch reads MQRVNMIMAESPGLITICLLGYLLSAEC. A propeptide spanning residues 29-46 is cleaved from the precursor; the sequence is TVFLDHENANKILNRPKR. Residues Tyr47, Asn48, Glu53, Glu54, Glu61, Glu63, Glu66, Glu67, Glu72, Glu73, and Glu76 each coordinate Ca(2+). Positions 47–92 constitute a Gla domain; the sequence is YNSGKLEEFVQGNLERECMEEKCSFEEAREVFENTERTTEFWKQYV. Residues Glu53, Glu54, Glu61, Glu63, Glu66, Glu67, Glu72, Glu73, Glu76, Glu79, and Glu82 each carry the 4-carboxyglutamate modification. Glu61 provides a ligand contact to Mg(2+). A disulfide bridge links Cys64 with Cys69. Position 66 (Glu66) interacts with Mg(2+). Glu72 contacts Mg(2+). Glu76 lines the Mg(2+) pocket. Glu82 lines the Ca(2+) pocket. Mg(2+) is bound at residue Glu82. O-linked (GalNAc...) threonine glycosylation occurs at Thr85. Ca(2+) is bound by residues Glu86, Asp93, Gly94, and Gln96. Glu86 carries the post-translational modification 4-carboxyglutamate. Glu86 lines the Mg(2+) pocket. The 37-residue stretch at 93–129 folds into the EGF-like 1; calcium-binding domain; that stretch reads DGDQCESNPCLNGGSCKDDINSYECWCPFGFEGKNCE. Disulfide bonds link Cys97/Cys108, Cys102/Cys117, Cys119/Cys128, Cys134/Cys145, Cys141/Cys155, Cys157/Cys170, Cys178/Cys335, Cys252/Cys268, Cys382/Cys396, and Cys407/Cys435. A glycan (O-linked (Glc...) serine) is linked at Ser99. O-linked (Fuc...) serine glycosylation is present at Ser107. The Ca(2+) site is built by Asp110 and Asp111. Asp110 is modified ((3R)-3-hydroxyaspartate). Ser114 is modified (phosphoserine). The 42-residue stretch at 130–171 folds into the EGF-like 2 domain; sequence LDVTCNIKNGRCEQFCKNSADNKVVCSCTEGYRLAENQKSCE. The propeptide at 192–226 is activation peptide; sequence AETVFPDVDYVNSTEAETILDNITQSTQSFNDFTR. Tyr201 is subject to Sulfotyrosine. Residue Ser204 is modified to Phosphoserine. Thr205 bears the Phosphothreonine; alternate mark. Thr205 is a glycosylation site (O-linked (GalNAc...) threonine; alternate). N-linked (GlcNAc...) asparagine glycosylation is present at Asn213. O-linked (GalNAc...) threonine glycosylation is found at Thr215 and Thr225. Residues 227-459 enclose the Peptidase S1 domain; the sequence is VVGGEDAKPG…YVNWIKEKTK (233 aa). His267 (charge relay system) is an active-site residue. Ca(2+) is bound by residues Glu281, Asn283, Glu286, Glu288, and Glu291. Asp315 (charge relay system) is an active-site residue. Catalysis depends on Ser411, which acts as the Charge relay system.

It belongs to the peptidase S1 family. Heterodimer of a light chain and a heavy chain; disulfide-linked. Interacts (inactive and activated) with F11 (activated) in calcium-dependent manner. Interacts with SERPINC1. Post-translationally, activated by factor XIa, which excises the activation peptide. The propeptide can also be removed by snake venom protease. In terms of processing, the iron and 2-oxoglutarate dependent 3-hydroxylation of aspartate and asparagine is (R) stereospecific within EGF domains. Activated by coagulation factor VIIa-tissue factor (F7-F3) complex in calcium-dependent manner. Predominantly O-glucosylated at Ser-99 by POGLUT1 in vitro.

It localises to the secreted. The catalysed reaction is Selective cleavage of Arg-|-Ile bond in factor X to form factor Xa.. Functionally, factor IX is a vitamin K-dependent plasma protein that participates in the intrinsic pathway of blood coagulation by converting factor X to its active form in the presence of Ca(2+) ions, phospholipids, and factor VIIIa. The chain is Coagulation factor IX (F9) from Pan troglodytes (Chimpanzee).